Here is an 83-residue protein sequence, read N- to C-terminus: Small ribosomal subunit protein bS20 (83 aa).

This sequence belongs to the bacterial ribosomal protein bS20 family.

In terms of biological role, binds directly to 16S ribosomal RNA. This chain is Small ribosomal subunit protein bS20, found in Amoebophilus asiaticus (strain 5a2).